The chain runs to 70 residues: Large ribosomal subunit protein bL31 (70 aa).

Zn(2+)-binding residues include Cys-16, Cys-18, Cys-37, and Cys-40.

This sequence belongs to the bacterial ribosomal protein bL31 family. Type A subfamily. Part of the 50S ribosomal subunit. The cofactor is Zn(2+).

Its function is as follows. Binds the 23S rRNA. This Shewanella baltica (strain OS223) protein is Large ribosomal subunit protein bL31.